The following is a 445-amino-acid chain: Alpha-1,3-mannosyl-glycoprotein 2-beta-N-acetylglucosaminyltransferase (445 aa).

The Cytoplasmic portion of the chain corresponds to 1–6 (MLKKQS). The chain crosses the membrane as a helical; Signal-anchor for type II membrane protein span at residues 7–29 (AGLVLWGAILFVAWNALLLLFFW). The Lumenal portion of the chain corresponds to 30 to 445 (TRPAPGRPPS…TWEGYDPSWN (416 aa)). Cysteines 113 and 143 form a disulfide. Arg-115, Asp-142, His-188, and Asp-210 together coordinate substrate. Residue Asp-211 coordinates Mn(2+). The cysteines at positions 237 and 303 are disulfide-linked. Asp-289 acts as the Proton acceptor in catalysis. Substrate is bound at residue Ser-320.

This sequence belongs to the glycosyltransferase 13 family. As to quaternary structure, interacts with MGAT4D. Interacts with BRI3 (isoforms 1 and 2); the interaction with isoform 2 is weaker than with isoform 1. Mn(2+) is required as a cofactor.

The protein resides in the golgi apparatus membrane. It localises to the cytoplasm. It is found in the perinuclear region. It carries out the reaction N(4)-(alpha-D-Man-(1-&gt;3)-[alpha-D-Man-(1-&gt;3)-[alpha-D-Man-(1-&gt;6)]-alpha-D-Man-(1-&gt;6)]-beta-D-Man-(1-&gt;4)-beta-D-GlcNAc-(1-&gt;4)-beta-D-GlcNAc)-L-asparaginyl-[protein] (N-glucan mannose isomer 5A1,2) + UDP-N-acetyl-alpha-D-glucosamine = N(4)-{beta-D-GlcNAc-(1-&gt;2)-alpha-D-Man-(1-&gt;3)-[alpha-D-Man-(1-&gt;3)-[alpha-D-Man-(1-&gt;6)]-alpha-D-Man-(1-&gt;6)]-beta-D-Man-(1-&gt;4)-beta-D-GlcNAc-(1-&gt;4)-beta-D-GlcNAc}-L-asparaginyl-[protein] + UDP + H(+). It functions in the pathway protein modification; protein glycosylation. Initiates complex N-linked carbohydrate formation. Essential for the conversion of high-mannose to hybrid and complex N-glycans. The chain is Alpha-1,3-mannosyl-glycoprotein 2-beta-N-acetylglucosaminyltransferase (MGAT1) from Homo sapiens (Human).